A 188-amino-acid chain; its full sequence is Peptidyl-prolyl cis-trans isomerase H (188 aa).

Position 2 is an N-acetylalanine (A2). In terms of domain architecture, PPIase cyclophilin-type spans 14–176 (FFDVSIGGQE…WTHSLTCPAL (163 aa)).

The protein belongs to the cyclophilin-type PPIase family. PPIase H subfamily. As to quaternary structure, interacts directly with PRPF4. Part of a heteromeric complex containing PPIH, PRPF3 and PRPF4 that is stable in the absence of RNA. Component of the U4/U6-U5 tri-snRNP complex composed of the U4, U6 and U5 snRNAs and at least PRPF3, PRPF4, PRPF6, PRPF8, PRPF31, SNRNP200, TXNL4A, SNRNP40, DDX23, CD2BP2, PPIH, SNU13, EFTUD2, SART1 and USP39. Heterodimer with PRPF18. Heterodimer with PRPF18.

Its subcellular location is the nucleus speckle. The protein localises to the cytoplasm. The enzyme catalyses [protein]-peptidylproline (omega=180) = [protein]-peptidylproline (omega=0). Inhibited by cyclosporin A. Its function is as follows. PPIase that catalyzes the cis-trans isomerization of proline imidic peptide bonds in oligopeptides and may therefore assist protein folding. Participates in pre-mRNA splicing. May play a role in the assembly of the U4/U5/U6 tri-snRNP complex, one of the building blocks of the spliceosome. May act as a chaperone. The sequence is that of Peptidyl-prolyl cis-trans isomerase H (Ppih) from Mus musculus (Mouse).